A 683-amino-acid chain; its full sequence is Phosphomethylpyrimidine synthase (683 aa).

Substrate is bound by residues Asn-235, Met-264, Tyr-293, His-329, 349–351, 390–393, and Glu-429; these read SRG and DGMR. A Zn(2+)-binding site is contributed by His-433. A substrate-binding site is contributed by Tyr-456. Position 497 (His-497) interacts with Zn(2+). [4Fe-4S] cluster-binding residues include Cys-577, Cys-580, and Cys-585. A disordered region spans residues 647–683; that stretch reads RQSPGVESTSLESTSLESTVLESTSLESTALEKAKEV. Positions 653–675 are enriched in low complexity; that stretch reads ESTSLESTSLESTVLESTSLEST.

This sequence belongs to the ThiC family. Homodimer. [4Fe-4S] cluster is required as a cofactor.

The enzyme catalyses 5-amino-1-(5-phospho-beta-D-ribosyl)imidazole + S-adenosyl-L-methionine = 4-amino-2-methyl-5-(phosphooxymethyl)pyrimidine + CO + 5'-deoxyadenosine + formate + L-methionine + 3 H(+). It participates in cofactor biosynthesis; thiamine diphosphate biosynthesis. Catalyzes the synthesis of the hydroxymethylpyrimidine phosphate (HMP-P) moiety of thiamine from aminoimidazole ribotide (AIR) in a radical S-adenosyl-L-methionine (SAM)-dependent reaction. The polypeptide is Phosphomethylpyrimidine synthase (Shewanella loihica (strain ATCC BAA-1088 / PV-4)).